The chain runs to 20 residues: Short cationic peptide-4a (20 aa).

Glutamate 20 carries the post-translational modification Glutamic acid 1-amide.

In terms of tissue distribution, expressed by the venom gland.

The protein resides in the secreted. The polypeptide is Short cationic peptide-4a (Cupiennius salei (American wandering spider)).